The primary structure comprises 214 residues: Holliday junction branch migration complex subunit RuvA (214 aa).

Residues 1–64 are domain I; that stretch reads MITRIRGEML…EDAMTLYGFT (64 aa). The tract at residues 65–143 is domain II; the sequence is SGEQLAVFEL…DITSKDAYQD (79 aa). The tract at residues 144–160 is flexible linker; the sequence is ISASEKLDNTGEKLGIS. The segment at 161–214 is domain III; it reads TRHKHLDELKAALSSLGYTNREIEKTVDAIQGQITEGQDMEELLRLALQKLNTK.

Belongs to the RuvA family. Homotetramer. Forms an RuvA(8)-RuvB(12)-Holliday junction (HJ) complex. HJ DNA is sandwiched between 2 RuvA tetramers; dsDNA enters through RuvA and exits via RuvB. An RuvB hexamer assembles on each DNA strand where it exits the tetramer. Each RuvB hexamer is contacted by two RuvA subunits (via domain III) on 2 adjacent RuvB subunits; this complex drives branch migration. In the full resolvosome a probable DNA-RuvA(4)-RuvB(12)-RuvC(2) complex forms which resolves the HJ.

Its subcellular location is the cytoplasm. Its function is as follows. The RuvA-RuvB-RuvC complex processes Holliday junction (HJ) DNA during genetic recombination and DNA repair, while the RuvA-RuvB complex plays an important role in the rescue of blocked DNA replication forks via replication fork reversal (RFR). RuvA specifically binds to HJ cruciform DNA, conferring on it an open structure. The RuvB hexamer acts as an ATP-dependent pump, pulling dsDNA into and through the RuvAB complex. HJ branch migration allows RuvC to scan DNA until it finds its consensus sequence, where it cleaves and resolves the cruciform DNA. The polypeptide is Holliday junction branch migration complex subunit RuvA (Natranaerobius thermophilus (strain ATCC BAA-1301 / DSM 18059 / JW/NM-WN-LF)).